The chain runs to 327 residues: MSERIAVIGSGAFGTALAAVIALAGRSPVILVGRNPSLVADLKAERLHDAVLPGIALPESLEFSAEAEAIAGASIVLFAMPSQAQADAARQYGPYLSKDAVVVTCAKGIERTTGNLLTDMLERELPDHPVAVLSGPGFAADIAKGLPTAMAIAAADMETAERLAQAISGRTFRLYASDDRIGVQLGGALKNVLAIACGIVEGRGIGESARAALIARGLAEMSRFVVAKGGQADTVRGLSGLGDLVLTGTSHQSRNLRFGIALGRGEKADPLQGALVEGALAASVASRLAAALSISMPITDAVSAIIDGRLEIADAIEQLMTRPITTE.

NADPH is bound by residues Phe13, Arg34, and Lys107. 2 residues coordinate sn-glycerol 3-phosphate: Lys107 and Gly135. Ala139 provides a ligand contact to NADPH. Residues Lys190, Asp243, Ser253, Arg254, and Asn255 each coordinate sn-glycerol 3-phosphate. Lys190 (proton acceptor) is an active-site residue. Arg254 contacts NADPH. NADPH contacts are provided by Val276 and Glu277.

Belongs to the NAD-dependent glycerol-3-phosphate dehydrogenase family.

It is found in the cytoplasm. It catalyses the reaction sn-glycerol 3-phosphate + NAD(+) = dihydroxyacetone phosphate + NADH + H(+). The catalysed reaction is sn-glycerol 3-phosphate + NADP(+) = dihydroxyacetone phosphate + NADPH + H(+). The protein operates within membrane lipid metabolism; glycerophospholipid metabolism. Its function is as follows. Catalyzes the reduction of the glycolytic intermediate dihydroxyacetone phosphate (DHAP) to sn-glycerol 3-phosphate (G3P), the key precursor for phospholipid synthesis. The chain is Glycerol-3-phosphate dehydrogenase [NAD(P)+] from Rhizobium etli (strain CIAT 652).